Consider the following 1487-residue polypeptide: Collagen alpha-1(II) chain (1487 aa).

An N-terminal signal peptide occupies residues 1 to 25 (MIRLGAPQTLVLLTLLVAAVLRCQG). Positions 26 to 181 (QDVQEAGSCV…PPGLGGNFAA (156 aa)) are cleaved as a propeptide — N-terminal propeptide. In terms of domain architecture, VWFC spans 32-90 (GSCVQDGQRYNDKDVWKPEPCRICVCDTGTVLCDDIICEDVKDCLSPEIPFGECCPICP). Positions 97–1237 (SGQPGPKGQK…PREKGPDPLQ (1141 aa)) are disordered. Composition is skewed to basic and acidic residues over residues 105–116 (QKGEPGDIKDIV) and 133–154 (PRGDRGDKGEKGAPGPRGRDGE). The span at 158–173 (PGNPGPPGPPGPPGPP) shows a compositional bias: pro residues. Lys-190 bears the 5-hydroxylysine mark. Residue Lys-190 is glycosylated (O-linked (Gal...) hydroxylysine). Residues 201-1214 (GPMGPMGPRG…PGPPGPPGPP (1014 aa)) are triple-helical region. Over residues 208 to 217 (PRGPPGPAGA) the composition is skewed to pro residues. Residues 218 to 239 (PGPQGFQGNPGEPGEPGVSGPM) show a composition bias toward low complexity. Over residues 241-250 (PRGPPGPPGK) the composition is skewed to pro residues. The span at 251-265 (PGDDGEAGKPGKAGE) shows a compositional bias: basic and acidic residues. Lys-287, Lys-299, and Lys-308 each carry 5-hydroxylysine. 3 O-linked (Gal...) hydroxylysine glycosylation sites follow: Lys-287, Lys-299, and Lys-308. 2 stretches are compositionally biased toward low complexity: residues 310 to 320 (ESGSPGENGSP) and 335 to 350 (TGPAGAAGARGNDGQP). The segment covering 360–369 (GPAGGPGFPG) has biased composition (gly residues). Composition is skewed to low complexity over residues 370–382 (APGAKGEAGPTGA) and 391–431 (PRGE…AGAP). 5-hydroxylysine is present on Lys-374. O-linked (Gal...) hydroxylysine glycosylation is present at Lys-374. Pro residues predominate over residues 433-442 (FPGPRGPPGP). Lys-608 and Lys-620 each carry 5-hydroxylysine. Residues Lys-608 and Lys-620 are each glycosylated (O-linked (Gal...) hydroxylysine). Composition is skewed to low complexity over residues 622 to 631 (LPGAPGLRGL) and 656 to 667 (QGAPGPSGFQGL). 2 positions are modified to 4-hydroxyproline: Pro-659 and Pro-668. Pro-670 bears the 3-hydroxyproline mark. 4-hydroxyproline is present on residues Pro-671 and Pro-674. Basic and acidic residues predominate over residues 764–775 (KGDRGDVGEKGP). 2 stretches are compositionally biased toward low complexity: residues 833-848 (AGFAGPPGADGQPGAK) and 877-913 (PTGVTGPKGARGAQGPPGATGFPGAAGRVGPPGSNGN). Pro-907 is modified (3-hydroxyproline). Pro-908, Pro-914, and Pro-920 each carry 4-hydroxyproline. A compositionally biased stretch (pro residues) spans 1069–1079 (APGPPGSPGPA). A compositionally biased stretch (basic and acidic residues) spans 1115-1129 (RGDKGEAGEPGERGL). The residue at position 1130 (Lys-1130) is a 5-hydroxylysine. Lys-1130 is a glycosylation site (O-linked (Gal...) hydroxylysine). A 3-hydroxyproline modification is found at Pro-1144. The span at 1148–1157 (SGDQGASGPA) shows a compositional bias: low complexity. A 4-hydroxyproline modification is found at Pro-1181. Pro-1186 bears the 3-hydroxyproline mark. A 4-hydroxyproline modification is found at Pro-1187. A compositionally biased stretch (pro residues) spans 1199 to 1216 (AGPPGNPGPPGPPGPPGP). Pro-1201 bears the 3-hydroxyproline mark. Pro-1202 and Pro-1205 each carry 4-hydroxyproline. Pro-1207 is subject to 3-hydroxyproline. A 4-hydroxyproline mark is found at Pro-1208 and Pro-1211. At Pro-1213 the chain carries 3-hydroxyproline. A 4-hydroxyproline modification is found at Pro-1214. Residues 1215–1241 (GPGIDMSAFAGLGPREKGPDPLQYMRA) form a nonhelical region (C-terminal) region. The 235-residue stretch at 1253-1487 (AEVDATLKSL…GVDIGPVCFL (235 aa)) folds into the Fibrillar collagen NC1 domain. Disulfide bonds link Cys-1283/Cys-1315, Cys-1323/Cys-1485, and Cys-1393/Cys-1438. Asp-1301, Asn-1303, Gln-1304, Cys-1306, and Asp-1309 together coordinate Ca(2+). The N-linked (GlcNAc...) asparagine glycan is linked to Asn-1388.

Belongs to the fibrillar collagen family. In terms of assembly, homotrimers of alpha 1(II) chains. Post-translationally, the N-telopeptide is covalently linked to the helical COL2 region of alpha 1(IX), alpha 2(IX) and alpha 3(IX) chain. The C-telopeptide is covalently linked to an another site in the helical region of alpha 3(IX) COL2. Contains mostly 4-hydroxyproline. Prolines at the third position of the tripeptide repeating unit (G-X-P) are 4-hydroxylated in some or all of the chains. In terms of processing, contains 3-hydroxyproline at a few sites. This modification occurs on the first proline residue in the sequence motif Gly-Pro-Hyp, where Hyp is 4-hydroxyproline. Post-translationally, lysine residues at the third position of the tripeptide repeating unit (G-X-Y) are 5-hydroxylated in some or all of the chains. O-glycosylated on hydroxylated lysine residues. The O-linked glycan consists of a Glc-Gal disaccharide. As to expression, isoform 2 is highly expressed in juvenile chondrocyte and low in fetal chondrocyte.

The protein localises to the secreted. It is found in the extracellular space. The protein resides in the extracellular matrix. Its function is as follows. Type II collagen is specific for cartilaginous tissues. It is essential for the normal embryonic development of the skeleton, for linear growth and for the ability of cartilage to resist compressive forces. The sequence is that of Collagen alpha-1(II) chain from Homo sapiens (Human).